The following is a 316-amino-acid chain: Small ribosomal subunit biogenesis GTPase RsgA (316 aa).

The disordered stretch occupies residues 1–20 (MSKLSHQQQRRIHNHRQNKL). The segment covering 8-18 (QQRRIHNHRQN) has biased composition (basic residues). Residues 92–251 (AGKLKPVASN…IIDTPGVRGF (160 aa)) enclose the CP-type G domain. Residues 139-142 (NKSD) and 193-201 (GQSGVGKSS) contribute to the GTP site. Zn(2+)-binding residues include C275, C280, H282, and C288.

It belongs to the TRAFAC class YlqF/YawG GTPase family. RsgA subfamily. In terms of assembly, monomer. Associates with 30S ribosomal subunit, binds 16S rRNA. Zn(2+) is required as a cofactor.

The protein resides in the cytoplasm. Its function is as follows. One of several proteins that assist in the late maturation steps of the functional core of the 30S ribosomal subunit. Helps release RbfA from mature subunits. May play a role in the assembly of ribosomal proteins into the subunit. Circularly permuted GTPase that catalyzes slow GTP hydrolysis, GTPase activity is stimulated by the 30S ribosomal subunit. This chain is Small ribosomal subunit biogenesis GTPase RsgA, found in Dichelobacter nodosus (strain VCS1703A).